A 61-amino-acid polypeptide reads, in one-letter code: MARAGILVVDGKVWRTVYYRFATREEWEGKVSTNLIFKECRQSAAMKRVLRVYKRTSMGTQ.

The chain is Putative protein RenD (renD) from Escherichia coli (strain K12).